We begin with the raw amino-acid sequence, 87 residues long: MVEKMNEQIYIIPLRDVKRSPRWKRSNTAMKDIRAFLAKHMKSEDVKLDASINEKVWERGSEKPPRKIRVRAMKFDDGQVQAELAQE.

Belongs to the eukaryotic ribosomal protein eL31 family.

This Methanosphaerula palustris (strain ATCC BAA-1556 / DSM 19958 / E1-9c) protein is Large ribosomal subunit protein eL31.